We begin with the raw amino-acid sequence, 265 residues long: Histone H1 (265 aa).

The span at 1-27 (MATEEPIVAVETVPEPIVTEPTTITEP) shows a compositional bias: low complexity. Disordered regions lie at residues 1-66 (MATE…PTYE), 131-226 (AAKK…TTPG), and 242-265 (VKSV…GGRK). A compositionally biased stretch (basic and acidic residues) spans 29 to 42 (VPEKEEPKAEVEKT). Over residues 43–55 (KKAKGSKPKKASK) the composition is skewed to basic residues. The H15 domain occupies 61–130 (SHPTYEEMIK…KVKGSFKLSA (70 aa)). Positions 140-171 (PKAKTAAKAKSVKAKPAAKPKAKAVVKPKVAS) are enriched in basic residues. Residues 186–202 (KPKTVAAKTKPTAAKPK) are compositionally biased toward low complexity. Residues 203-215 (AVVKPKSKVKPAK) show a composition bias toward basic residues. Residues 216-226 (VAKTSVKTTPG) show a composition bias toward low complexity.

Belongs to the histone H1/H5 family.

Its subcellular location is the nucleus. The protein resides in the chromosome. Its function is as follows. Histones H1 are necessary for the condensation of nucleosome chains into higher-order structures. The sequence is that of Histone H1 from Pisum sativum (Garden pea).